The sequence spans 1193 residues: MTGQLVQYGRHRQRRSYARISEVLELPNLIEIQTSSYQWFLDEGLREMFQDISPIEDFTGNLSLEFIDYSLGEPKYPVEESKERDVTYSAPLRVKVRLINKETGEVKDQDVFMGDFPIMTDTGTFIINGAERVIVSQLVRSPSVYFSGKVDKNGKKGFTATVIPNRGAWLEYETDAKDVVYVRIDRTRKLPVTVLLRALGFGSDQEILDLIGENEYLRNTLDKDNTENSDKALLEIYERLRPGEPPTVENAKSLLDSRFFDPKRYDLANVGRYKINKKLHIKNRLFNQRLAETLVDPETGEILAEKGQILDRRTLDKVLPYLENGIGFRKLYPNGGVVEDEVTLQSIKIFAPTDQEGEQVINVIGNAYIEEEIKNITPADIISSISYFFNLLHGVGDTDDIDHLGNRRLRSVGELLQNQFRIGLSRMERVVRERMSIQDTNTITPQQLINIRPVIASIKEFFGSSQLSQFMDQTNPLAELTHKRRLSALGPGGLTRERAGMEVRDVHYSHYGRMCPIETPEGPNIGLINSLSSYAKVNRFGFIETPYRRVDPETGKVTGRIDYLTADEEDNYVVAQANARLDDEGAFIDDSIVARFRGENTVVSRNRVDYMDVSPKQVVSAATACIPFLENDDSNRALMGANMQRQAVPLMQPEAPFVGTGMEYVSGKDSGAAVICKHPGIVERVEAKNVWVRRYEEVDGQKVKGNLDKYSLLKFVRSNQGTCYNQRPIVSVGDEVVKGEILADGPSMELGELALGRNVMVGFMTWDGYNYEDAIIMSERLVKDDVYTSIHIEEYESEARDTKLGPEEITRDIPNVGEDALRNLDDRGIIRIGAEVKDGDLLVGKVTPKGVTELTAEERLLHAIFGEKAREVRDTSLRVPHGGGGIIHDVKVFNREDGDELPPGVNQLVRVYIVQKRKISEGDKMAGRHGNKGVISKILPEEDMPYLPDGTPIDIMLNPLGVPSRMNIGQVLELHMGMAARYLGIHIASPVFDGAREEDVWETLEEAGMSRDAKTVLYDGRTGEPFDNRVSVGIMYMIKLAHMVDDKLHARSTGPYSLVTQQPLGGKAQFGGQRFGEMEVWALEAYGAAYTLQEILTVKSDDVVGRVKTYEAIVKGDNVPEPGVPESFKVLIKELQSLGMDVKILSGDEEEIEMRDLEDEEDAKQADGLALSGDEEPEETASADVERDVVTKE.

Residues 1149 to 1162 (EEEIEMRDLEDEED) show a composition bias toward acidic residues. Residues 1149–1193 (EEEIEMRDLEDEEDAKQADGLALSGDEEPEETASADVERDVVTKE) are disordered. A compositionally biased stretch (basic and acidic residues) spans 1184-1193 (DVERDVVTKE).

It belongs to the RNA polymerase beta chain family. As to quaternary structure, RNAP is composed of a core of 2 alpha, a beta and a beta' subunit. The core is associated with a delta subunit, and at least one of epsilon or omega. When a sigma factor is associated with the core the holoenzyme is formed, which can initiate transcription.

It catalyses the reaction RNA(n) + a ribonucleoside 5'-triphosphate = RNA(n+1) + diphosphate. In terms of biological role, DNA-dependent RNA polymerase catalyzes the transcription of DNA into RNA using the four ribonucleoside triphosphates as substrates. The chain is DNA-directed RNA polymerase subunit beta from Bacillus subtilis (strain 168).